The sequence spans 221 residues: Probable glutathione S-transferase parC (221 aa).

The GST N-terminal domain maps to 4–83 (EEVILLDFWP…YIEEVWKDKA (80 aa)). Glutathione is bound by residues serine 14, lysine 41, isoleucine 55, and 67 to 68 (ES). A GST C-terminal domain is found at 90–214 (DPYDRAQARF…PKVLEFVKVL (125 aa)).

This sequence belongs to the GST superfamily. Phi family. Abundant in seedlings and roots. It is also found in the shoot tips, flowers and leaves.

It carries out the reaction RX + glutathione = an S-substituted glutathione + a halide anion + H(+). Conjugation of reduced glutathione to a wide number of exogenous and endogenous hydrophobic electrophiles. The sequence is that of Probable glutathione S-transferase parC (PARC) from Nicotiana tabacum (Common tobacco).